The primary structure comprises 576 residues: Polyphenol oxidase 3 (576 aa).

Cu cation contacts are provided by His-61, His-85, His-94, His-259, His-263, and His-296. Positions 83–85 (CTH) form a cross-link, 2'-(S-cysteinyl)-histidine (Cys-His). His-263 contributes to the substrate binding site. Positions 393-576 (FVTTQTENPA…ILDDIIHRVN (184 aa)) are cleaved as a propeptide — removed in mature form.

This sequence belongs to the tyrosinase family. As to quaternary structure, tetramer composed of two subunits of PPO3 (H subunits) and two subunits of the as yet uncharacterized product of ORF239342 (L subunits). The cofactor is Cu(2+). In terms of processing, the C-ter is probably cleaved after Gly-392 since the mature active protein is smaller than the protein encoded by the gene.

The catalysed reaction is 2 L-dopa + O2 = 2 L-dopaquinone + 2 H2O. The enzyme catalyses L-tyrosine + O2 = L-dopaquinone + H2O. Copper-containing oxidase that catalyzes both the o-hydroxylation of monophenols and the subsequent oxidation of the resulting o-diphenols into reactive o-quinones, which evolve spontaneously to produce intermediates, which associate in dark brown pigments. Involved in the initial step of melanin synthesis. Melanins constitute a mechanism of defense and resistance to stress such as UV radiations, free radicals, gamma rays, dehydratation and extreme temperatures, and contribute to the fungal cell-wall resistance against hydrolytic enzymes in avoiding cellular lysis. Fungal pigments are also involved in the formation and stability of spores. The protein is Polyphenol oxidase 3 (PPO3) of Agaricus bisporus (White button mushroom).